Reading from the N-terminus, the 881-residue chain is Putative cation exchanger C521.04c (881 aa).

The segment covering 1–19 has biased composition (polar residues); sequence MSQPADINQSESSAETITQ. Disordered regions lie at residues 1 to 39 and 52 to 142; these read MSQPADINQSESSAETITQGRRADRPEETPSSSVYEQNL and ADAT…LRSE. Positions 63–77 are enriched in basic and acidic residues; sequence NDRDIYSPREIDQYT. Residues 83–95 are compositionally biased toward polar residues; the sequence is RTDPSTSTISNAR. The segment covering 99 to 113 has biased composition (low complexity); that stretch reads RNSVSRLSRSSSNVR. Position 129 is a phosphoserine (S129). A run of 8 helical transmembrane segments spans residues 200-220, 329-349, 407-427, 438-458, 471-491, 504-524, 537-557, and 594-614; these read IWLICFGAPLFLVIFICYIFF, LIIAPTLLITSAICMFTIFFV, IYIIYFDMLALIIPTIFFGFF, VFLFTASLVSIIPLAYFIGMA, GAFINAFFGSVIEVFLYSVAL, IGSILAGLLLMPGLSMCAGAI, GATSTMLLFAVLGAFAPTMLF, and LPFTYCCSIMLVLAYAIGLWF. The segment at 641-717 is disordered; the sequence is VGEPVNQDTA…SQNSHGDDAP (77 aa). Residues 646-657 are compositionally biased toward polar residues; that stretch reads NQDTAGNMSDSS. Low complexity predominate over residues 678–688; sequence SSGLSSNGSEN. The next 5 membrane-spanning stretches (helical) occupy residues 726–746, 762–782, 794–814, 828–848, and 859–879; these read IILLSATFLYSLIAEILVEHV, LTLFALVPNTTEFMNAISFAL, SAYALQVCLLQIPCLMGYSLF, LFTMVFPTWDMICVMICVFLL, and YFKGSILVLAYLVSMLGFTFF.

This sequence belongs to the Ca(2+):cation antiporter (CaCA) (TC 2.A.19) family.

It localises to the endoplasmic reticulum membrane. Functionally, putative cation exchanger. The polypeptide is Putative cation exchanger C521.04c (Schizosaccharomyces pombe (strain 972 / ATCC 24843) (Fission yeast)).